Consider the following 265-residue polypeptide: Undecaprenyl-diphosphatase (265 aa).

Helical transmembrane passes span Arg-38–Leu-58, Arg-75–Val-95, Pro-108–Gly-128, Val-135–Pro-155, Phe-181–Met-201, Val-215–Gly-235, and Val-244–Ala-264.

This sequence belongs to the UppP family.

Its subcellular location is the cell inner membrane. The enzyme catalyses di-trans,octa-cis-undecaprenyl diphosphate + H2O = di-trans,octa-cis-undecaprenyl phosphate + phosphate + H(+). In terms of biological role, catalyzes the dephosphorylation of undecaprenyl diphosphate (UPP). Confers resistance to bacitracin. This Xanthomonas euvesicatoria pv. vesicatoria (strain 85-10) (Xanthomonas campestris pv. vesicatoria) protein is Undecaprenyl-diphosphatase.